A 513-amino-acid polypeptide reads, in one-letter code: Protein CYCLOPS (513 aa).

The interval 327-435 is disordered; it reads QIHGGTASGE…ERSRKMAEAK (109 aa). Positions 334 to 347 are enriched in low complexity; sequence SGEPSQSESSAAAP. Residues 359-381 show a composition bias toward polar residues; it reads PSNSSQTLCDSSWKQVGESTQNR. Over residues 384–396 the composition is skewed to basic and acidic residues; that stretch reads GVREQIMDNLKDD. 2 consecutive short sequence motifs (nuclear localization signal) follow at residues 397–401 and 421–424; these read RKRKR and KKRR. A coiled-coil region spans residues 447–513; that stretch reads MQAVMKRCEN…ERLLSETGKI (67 aa).

This sequence belongs to the CYCLOPS family.

Its subcellular location is the nucleus. Involved symbiotic signaling. Required for root infection by symbiotic rhizobia, infection thread (IT) formation, and nodule development. Required for symbiosome formation (i.e. the release of the bacteria from the ITs) and subsequent symbiosome development. Involved in arbuscular mycorrhizal (AM) symbiosis. This Pisum sativum (Garden pea) protein is Protein CYCLOPS.